Here is a 183-residue protein sequence, read N- to C-terminus: Macro domain-containing protein (183 aa).

In terms of domain architecture, Macro spans 1-174; sequence MKKVHLIQAD…IYKNILSNID (174 aa).

Belongs to the MacroD-type family.

The protein is Macro domain-containing protein of Acinetobacter sp. (strain ED45-25).